Consider the following 616-residue polypeptide: Auxin efflux carrier component 4 (616 aa).

The Extracellular segment spans residues 1–7; that stretch reads MITWHDL. Residues 8-28 form a helical membrane-spanning segment; the sequence is YTVLTAVVPLYVAMILAYGSV. Topologically, residues 29-38 are cytoplasmic; it reads QWWKIFSPDQ. Residues 39–59 form a helical membrane-spanning segment; the sequence is CSGINRFVAIFAVPLLSFHFI. (indol-3-yl)acetate is bound at residue Val51. At 60 to 70 the chain is on the extracellular side; sequence STNDPYAMNFR. Residues 71 to 91 form a helical membrane-spanning segment; that stretch reads FVAADTLQKIIMLVLLALWAN. Residues 92-101 are Cytoplasmic-facing; the sequence is LTKNGSLEWM. A helical transmembrane segment spans residues 102–122; sequence ITIFSLSTLPNTLVMGIPLLI. (indol-3-yl)acetate is bound by residues Asn112 and Leu114. Topologically, residues 123-131 are extracellular; sequence AMYGTYAGS. Residues 132–152 traverse the membrane as a helical segment; the sequence is LMVQVVVLQCIIWYTLLLFLF. Tyr145 lines the (indol-3-yl)acetate pocket. Residues 153–476 are Cytoplasmic-facing; sequence EYRGAKLLIM…LIRNPNTYSS (324 aa). Phosphoserine is present on residues Ser223, Ser240, and Ser280. The tract at residues 302-343 is disordered; the sequence is AAGSYPAPNPEFSTGTGVSTKPNKIPKENQQQLQEKDSKASH. Positions 312–334 are enriched in polar residues; that stretch reads EFSTGTGVSTKPNKIPKENQQQL. Ser358 and Ser395 each carry phosphoserine. The interval 390-411 is disordered; the sequence is DQPRKSNARGGGDDIGGLDSGE. Positions 398-409 are enriched in gly residues; sequence RGGGDDIGGLDS. Residues 477–497 traverse the membrane as a helical segment; it reads LIGLIWALVAYRWHVAMPKIL. The Extracellular portion of the chain corresponds to 498 to 500; the sequence is QQS. Residues 501–521 traverse the membrane as a helical segment; the sequence is ISILSDAGLGMAMFSLGLFMA. Over 522–535 the chain is Cytoplasmic; that stretch reads LQPKIIACGNSVAT. The chain crosses the membrane as a helical span at residues 536-556; the sequence is FAMAVRFITGPAIMAVAGIAI. The Extracellular portion of the chain corresponds to 557-561; the sequence is GLHGD. The chain crosses the membrane as a helical span at residues 562–582; sequence LLRIAIVQAALPQGIVPFVFA. (indol-3-yl)acetate-binding residues include Ile576 and Val577. Over 583–595 the chain is Cytoplasmic; sequence KEYNVHPTILSTG. A helical transmembrane segment spans residues 596–616; that stretch reads VIFGMLIALPITLVYYILLGL.

It belongs to the auxin efflux carrier (TC 2.A.69.1) family. In terms of assembly, homodimer. As to expression, expressed in the quiescent center precursors and surrounding cells. Present in columella cells of primary roots. Detected in pollen.

The protein resides in the cell membrane. Functionally, acts as a component of the auxin efflux carrier. Plays a role in generating a sink for auxin into columella cells. Maintains the endogenous auxin gradient, which is essential for correct root patterning. Involved in EXO70A3-regulated gravitropic responses in columella cells and in root system architecture (RSA). Together with PIN3 and PIN7, involved in the connective auxin transport (CAT) that ensures communication across the shoot system, and modulates strigolactone-mediated shoot branching control. The abcb19 pin3 pin4 pin7 quadruple mutant exhibits an additive phenotype on strigolactone-mediated bud outgrowth responses and shoot branching control. This is Auxin efflux carrier component 4 from Arabidopsis thaliana (Mouse-ear cress).